Consider the following 367-residue polypeptide: B2 bradykinin receptor (367 aa).

The Extracellular segment spans residues 1 to 36 (MLNITSQVLAPALNGSVSQSSGCPNTEWSGWLNVIQ). N-linked (GlcNAc...) asparagine glycosylation is found at N3 and N14. The helical transmembrane segment at 37-60 (APFLWVLFVLATLENLFVLSVFCL) threads the bilayer. Residues 61–69 (HKSSCTVAE) lie on the Cytoplasmic side of the membrane. Residues 70–94 (VYLGNLAAADLILACGLPFWAVTIA) traverse the membrane as a helical segment. Residues 95–107 (NHFDWLFGEALCR) lie on the Extracellular side of the membrane. C106 and C187 are oxidised to a cystine. The chain crosses the membrane as a helical span at residues 108 to 129 (VVNTMIYMNLYSSICFLMLVSI). The Cytoplasmic segment spans residues 130–151 (DRYLALVKTMSIGRMRRVRWAK). The residue at position 132 (Y132) is a Phosphotyrosine. The helical transmembrane segment at 152 to 174 (LYSLVIWGCTLLLSSPMLVFRTM) threads the bilayer. At 175-197 (KDYRDEGYNVTACIIDYPSRSWE) the chain is on the extracellular side. N-linked (GlcNAc...) asparagine glycosylation is present at N183. Residues 198 to 224 (VFTNVLLNLVGFLLPLSVITFCTVQIL) form a helical membrane-spanning segment. Residues 225–243 (QVLRNNEMQKFKEIQTERR) are Cytoplasmic-facing. A helical transmembrane segment spans residues 244–268 (ATVLVLAVLLLFVVCWLPFQVSTFL). The Extracellular portion of the chain corresponds to 269–287 (DTLLKLGVLSSCWDEHVID). The chain crosses the membrane as a helical span at residues 288 to 311 (VITQVGSFMGYSNSCLNPLVYVIV). The Cytoplasmic segment spans residues 312-367 (GKRFRKKSREVYRAACPKAGCVLEPVQAESSMGTLRTSISVERQIHKLPEWTRSSQ). The residue at position 323 (Y323) is a Phosphotyrosine. C327 carries the S-palmitoyl cysteine lipid modification. Position 342 is a phosphoserine (S342). T345 is modified (phosphothreonine). Residues S349 and S351 each carry the phosphoserine; by GRK6 modification.

This sequence belongs to the G-protein coupled receptor 1 family. Bradykinin receptor subfamily. BDKRB2 sub-subfamily. Forms a complex with PECAM1 and GNAQ. Interacts with PECAM1.

It localises to the cell membrane. Receptor for bradykinin. It is associated with G proteins that activate a phosphatidylinositol-calcium second messenger system. The sequence is that of B2 bradykinin receptor (BDKRB2) from Oryctolagus cuniculus (Rabbit).